Consider the following 621-residue polypeptide: 5-aminolevulinate synthase, mitochondrial (621 aa).

Residues 76–95 form a disordered region; that stretch reads DAKGSLAGRPVHHKAATEST. Residues arginine 122 and serine 234 each contribute to the substrate site. Pyridoxal 5'-phosphate-binding residues include serine 286, histidine 314, and threonine 359. Lysine 362 is a catalytic residue. At lysine 362 the chain carries N6-(pyridoxal phosphate)lysine. Pyridoxal 5'-phosphate is bound by residues threonine 391 and threonine 392. Threonine 477 serves as a coordination point for substrate.

Belongs to the class-II pyridoxal-phosphate-dependent aminotransferase family. In terms of assembly, homodimer. The cofactor is pyridoxal 5'-phosphate.

Its subcellular location is the mitochondrion matrix. It carries out the reaction succinyl-CoA + glycine + H(+) = 5-aminolevulinate + CO2 + CoA. The protein operates within porphyrin-containing compound metabolism; protoporphyrin-IX biosynthesis; 5-aminolevulinate from glycine: step 1/1. Its function is as follows. Catalyzes the synthesis of 5-aminolevulinate (ALA) from succinyl-CoA and glycine, the first and rate-limiting step in heme biosynthesis. The polypeptide is 5-aminolevulinate synthase, mitochondrial (hem1) (Agaricus bisporus (White button mushroom)).